The sequence spans 201 residues: Alpha-1-acid glycoprotein 1 (201 aa).

The N-terminal stretch at 1 to 18 (MALSWVLTVLSLLPLLEA) is a signal peptide. Glutamine 19 carries the pyrrolidone carboxylic acid modification. Intrachain disulfides connect cysteine 23/cysteine 165 and cysteine 90/cysteine 183. Asparagine 33 carries an N-linked (GlcNAc...) (complex) asparagine glycan. An N-linked (GlcNAc...) asparagine glycan is attached at asparagine 56. Asparagine 72 carries N-linked (GlcNAc...) (complex) asparagine glycosylation. Residues asparagine 93 and asparagine 103 are each glycosylated (N-linked (GlcNAc...) asparagine).

Belongs to the calycin superfamily. Lipocalin family. N-glycosylated. N-glycan heterogeneity at Asn-33: Hex5HexNAc4 (minor), Hex6HexNAc5 (major) and dHex1Hex6HexNAc5 (minor). As to expression, expressed by the liver and secreted in plasma.

The protein resides in the secreted. In terms of biological role, functions as a transport protein in the blood stream. Binds various ligands in the interior of its beta-barrel domain. Also binds synthetic drugs and influences their distribution and availability in the body. Appears to function in modulating the activity of the immune system during the acute-phase reaction. The sequence is that of Alpha-1-acid glycoprotein 1 (ORM1) from Homo sapiens (Human).